The chain runs to 466 residues: GTP cyclohydrolase 1 (466 aa).

3 residues coordinate Zn(2+): cysteine 342, histidine 345, and cysteine 416.

This sequence belongs to the GTP cyclohydrolase I family. As to quaternary structure, homodimer.

The enzyme catalyses GTP + H2O = 7,8-dihydroneopterin 3'-triphosphate + formate + H(+). It participates in cofactor biosynthesis; 7,8-dihydroneopterin triphosphate biosynthesis; 7,8-dihydroneopterin triphosphate from GTP: step 1/1. Functionally, GTP cyclohydrolase 1 is the first enzyme in the biosynthetic pathway leading to folic acid. The sequence is that of GTP cyclohydrolase 1 (GCH1) from Arabidopsis thaliana (Mouse-ear cress).